Reading from the N-terminus, the 61-residue chain is Protein translocase subunit SecE (61 aa).

Residues 39–59 (LGIILIGLIGMLIRIMGILVL) form a helical membrane-spanning segment.

The protein belongs to the SecE/SEC61-gamma family. Component of the Sec protein translocase complex. Heterotrimer consisting of SecY (alpha), SecG (beta) and SecE (gamma) subunits. The heterotrimers can form oligomers, although 1 heterotrimer is thought to be able to translocate proteins. Interacts with the ribosome. May interact with SecDF, and other proteins may be involved.

The protein resides in the cell membrane. Essential subunit of the Sec protein translocation channel SecYEG. Clamps together the 2 halves of SecY. May contact the channel plug during translocation. The chain is Protein translocase subunit SecE from Pyrococcus abyssi (strain GE5 / Orsay).